The primary structure comprises 162 residues: NADH-quinone oxidoreductase subunit I (162 aa).

2 consecutive 4Fe-4S ferredoxin-type domains span residues 53 to 83 (LRRY…IEAE) and 93 to 122 (TRYD…EGPN). The [4Fe-4S] cluster site is built by C63, C66, C69, C73, C102, C105, C108, and C112.

The protein belongs to the complex I 23 kDa subunit family. As to quaternary structure, NDH-1 is composed of 14 different subunits. Subunits NuoA, H, J, K, L, M, N constitute the membrane sector of the complex. [4Fe-4S] cluster serves as cofactor.

The protein resides in the cell inner membrane. The catalysed reaction is a quinone + NADH + 5 H(+)(in) = a quinol + NAD(+) + 4 H(+)(out). In terms of biological role, NDH-1 shuttles electrons from NADH, via FMN and iron-sulfur (Fe-S) centers, to quinones in the respiratory chain. The immediate electron acceptor for the enzyme in this species is believed to be ubiquinone. Couples the redox reaction to proton translocation (for every two electrons transferred, four hydrogen ions are translocated across the cytoplasmic membrane), and thus conserves the redox energy in a proton gradient. This is NADH-quinone oxidoreductase subunit I from Sphingopyxis alaskensis (strain DSM 13593 / LMG 18877 / RB2256) (Sphingomonas alaskensis).